Here is a 274-residue protein sequence, read N- to C-terminus: Syntaxin-12 (274 aa).

2 disordered regions span residues 1-20 (MSYGPLDMYRNPGPSGPQPR) and 128-147 (EKESIARARAGSRLSAEDRQ). An N-acetylserine modification is found at S2. Residues 2 to 250 (SYGPLDMYRN…AYYQKKSRKK (249 aa)) lie on the Cytoplasmic side of the membrane. Positions 33-130 (IQRISQATAQ…QRKVSEKEKE (98 aa)) form a coiled coil. A phosphoserine mark is found at S139, S142, S218, and S225. One can recognise a t-SNARE coiled-coil homology domain in the interval 178–240 (LELIKERETA…ERATDQLQRA (63 aa)). Residues 251–271 (MCILVLVLSVIVTVLVVVIWV) traverse the membrane as a helical; Anchor for type IV membrane protein segment. Over 272–274 (ASK) the chain is Vesicular.

This sequence belongs to the syntaxin family. In terms of assembly, associates with the BLOC-1 complex. Interacts with BLOC1S6. Interacts with NAPA and SNAP23. Identified in a complex containing STX6, STX12, VAMP4 and VTI1A. Interacts with GRIPAP1. Forms a complex with GRIP1, GRIA2 and NSG1; controls the intracellular fate of AMPAR and the endosomal sorting of the GRIA2 subunit toward recycling and membrane targeting. Interacts with NSG1. Interacts with TPC1. Interacts (via N-terminus) with VPS13B.

It is found in the endosome membrane. The protein localises to the golgi apparatus membrane. It localises to the endomembrane system. Its subcellular location is the early endosome membrane. The protein resides in the recycling endosome membrane. Functionally, SNARE promoting fusion of transport vesicles with target membranes. Together with SNARE STX6, promotes movement of vesicles from endosomes to the cell membrane, and may therefore function in the endocytic recycling pathway. Through complex formation with GRIP1, GRIA2 and NSG1 controls the intracellular fate of AMPAR and the endosomal sorting of the GRIA2 subunit toward recycling and membrane targeting. The chain is Syntaxin-12 (Stx12) from Mus musculus (Mouse).